A 195-amino-acid polypeptide reads, in one-letter code: Thymidine kinase (195 aa).

Residues 8 to 15 (GLMGSGKS) and 86 to 89 (DESQ) contribute to the ATP site. Glu-87 functions as the Proton acceptor in the catalytic mechanism. Residues Cys-146, Cys-151, Cys-184, and His-187 each contribute to the Zn(2+) site.

This sequence belongs to the thymidine kinase family. As to quaternary structure, homotetramer.

Its subcellular location is the cytoplasm. It catalyses the reaction thymidine + ATP = dTMP + ADP + H(+). The chain is Thymidine kinase (tdk) from Bacillus subtilis subsp. natto.